The primary structure comprises 378 residues: tRNA (guanine(26)-N(2))-dimethyltransferase (378 aa).

In terms of domain architecture, Trm1 methyltransferase spans 4–374; it reads KEVTEGKVRI…KGYEEIIRCV (371 aa). S-adenosyl-L-methionine contacts are provided by Arg-44, Arg-69, Asp-87, Asp-114, and Ala-115. Zn(2+)-binding residues include Cys-246, Cys-249, Cys-263, and Cys-266.

This sequence belongs to the class I-like SAM-binding methyltransferase superfamily. Trm1 family.

It carries out the reaction guanosine(26) in tRNA + 2 S-adenosyl-L-methionine = N(2)-dimethylguanosine(26) in tRNA + 2 S-adenosyl-L-homocysteine + 2 H(+). Dimethylates a single guanine residue at position 26 of a number of tRNAs using S-adenosyl-L-methionine as donor of the methyl groups. This is tRNA (guanine(26)-N(2))-dimethyltransferase from Saccharolobus islandicus (strain M.14.25 / Kamchatka #1) (Sulfolobus islandicus).